A 328-amino-acid chain; its full sequence is GMP reductase (328 aa).

The active-site Thioimidate intermediate is cysteine 176. Position 205–228 (205–228) interacts with NADP(+); that stretch reads IIADGGIRTHGDIAKSIRFGASMI.

It belongs to the IMPDH/GMPR family. GuaC type 2 subfamily.

The enzyme catalyses IMP + NH4(+) + NADP(+) = GMP + NADPH + 2 H(+). Its function is as follows. Catalyzes the irreversible NADPH-dependent deamination of GMP to IMP. It functions in the conversion of nucleobase, nucleoside and nucleotide derivatives of G to A nucleotides, and in maintaining the intracellular balance of A and G nucleotides. The polypeptide is GMP reductase (Streptococcus pneumoniae (strain CGSP14)).